We begin with the raw amino-acid sequence, 511 residues long: V-type proton ATPase subunit B, brain isoform (511 aa).

Residue R400 participates in ATP binding.

The protein belongs to the ATPase alpha/beta chains family. As to quaternary structure, V-ATPase is a heteromultimeric enzyme made up of two complexes: the ATP-hydrolytic V1 complex and the proton translocation V0 complex. The V1 complex consists of three catalytic AB heterodimers that form a heterohexamer, three peripheral stalks each consisting of EG heterodimers, one central rotor including subunits D and F, and the regulatory subunits C and H. The proton translocation complex V0 consists of the proton transport subunit a, a ring of proteolipid subunits c9c'', rotary subunit d, subunits e and f, and the accessory subunits ATP6AP1/Ac45 and ATP6AP2/PRR.

The protein localises to the apical cell membrane. It localises to the melanosome. The protein resides in the cytoplasm. It is found in the cytoplasmic vesicle. Its subcellular location is the secretory vesicle. The protein localises to the synaptic vesicle membrane. It localises to the clathrin-coated vesicle membrane. In terms of biological role, non-catalytic subunit of the V1 complex of vacuolar(H+)-ATPase (V-ATPase), a multisubunit enzyme composed of a peripheral complex (V1) that hydrolyzes ATP and a membrane integral complex (V0) that translocates protons. V-ATPase is responsible for acidifying and maintaining the pH of intracellular compartments and in some cell types, is targeted to the plasma membrane, where it is responsible for acidifying the extracellular environment. In renal intercalated cells, can partially compensate the lack of ATP6V1B1 and mediate secretion of protons (H+) into the urine under base-line conditions but not in conditions of acid load. The polypeptide is V-type proton ATPase subunit B, brain isoform (ATP6V1B2) (Pongo abelii (Sumatran orangutan)).